The following is a 387-amino-acid chain: 3-ketoacyl-CoA thiolase (387 aa).

Cysteine 91 serves as the catalytic Acyl-thioester intermediate. Catalysis depends on proton acceptor residues histidine 343 and cysteine 373.

It belongs to the thiolase-like superfamily. Thiolase family. As to quaternary structure, heterotetramer of two alpha chains (FadB) and two beta chains (FadA).

The protein localises to the cytoplasm. It catalyses the reaction an acyl-CoA + acetyl-CoA = a 3-oxoacyl-CoA + CoA. It participates in lipid metabolism; fatty acid beta-oxidation. In terms of biological role, catalyzes the final step of fatty acid oxidation in which acetyl-CoA is released and the CoA ester of a fatty acid two carbons shorter is formed. Involved in the aerobic and anaerobic degradation of long-chain fatty acids. The sequence is that of 3-ketoacyl-CoA thiolase from Escherichia coli O6:H1 (strain CFT073 / ATCC 700928 / UPEC).